Here is a 114-residue protein sequence, read N- to C-terminus: Large ribosomal subunit protein uL22 (114 aa).

It belongs to the universal ribosomal protein uL22 family. Part of the 50S ribosomal subunit.

This protein binds specifically to 23S rRNA; its binding is stimulated by other ribosomal proteins, e.g. L4, L17, and L20. It is important during the early stages of 50S assembly. It makes multiple contacts with different domains of the 23S rRNA in the assembled 50S subunit and ribosome. Its function is as follows. The globular domain of the protein is located near the polypeptide exit tunnel on the outside of the subunit, while an extended beta-hairpin is found that lines the wall of the exit tunnel in the center of the 70S ribosome. This chain is Large ribosomal subunit protein uL22, found in Mycoplasmopsis agalactiae (strain NCTC 10123 / CIP 59.7 / PG2) (Mycoplasma agalactiae).